A 421-amino-acid chain; its full sequence is Medium-chain specific acyl-CoA dehydrogenase, mitochondrial (421 aa).

The N-terminal 25 residues, 1–25, are a transit peptide targeting the mitochondrion; that stretch reads MAAAFGRCCRVLRSISRFHWRSQHT. Lys-69 is subject to N6-acetyllysine; alternate. The residue at position 69 (Lys-69) is an N6-succinyllysine; alternate. Residue 158–167 coordinates FAD; that stretch reads YCVTEPGAGS. Ser-167 lines the octanoyl-CoA pocket. Lys-179 bears the N6-succinyllysine mark. Position 191-193 (191-193) interacts with FAD; that stretch reads WIT. 4 positions are modified to N6-acetyllysine; alternate: Lys-212, Lys-217, Lys-259, and Lys-271. N6-succinyllysine; alternate occurs at positions 212, 217, 259, and 271. Residue Asp-278 participates in octanoyl-CoA binding. The residue at position 279 (Lys-279) is an N6-acetyllysine. Residue Arg-281 coordinates octanoyl-CoA. N6-acetyllysine is present on Lys-301. FAD contacts are provided by residues 306–308 and 316–317; these read RKT and HQ. 2 residues coordinate octanoyl-CoA: Arg-349 and Thr-351. Thr-351 is modified (phosphothreonine). 374 to 378 serves as a coordination point for FAD; that stretch reads QIFGG. Position 401 (Glu-401) interacts with octanoyl-CoA. The active-site Proton acceptor is the Glu-401. 402–405 serves as a coordination point for FAD; sequence GTSQ.

The protein belongs to the acyl-CoA dehydrogenase family. In terms of assembly, homotetramer. Interacts with the heterodimeric electron transfer flavoprotein ETF. FAD is required as a cofactor. In terms of processing, acetylated. Could occur at proximity of the cofactor-binding sites and reduce the catalytic activity. Could be deacetylated by SIRT3.

Its subcellular location is the mitochondrion matrix. It catalyses the reaction a medium-chain 2,3-saturated fatty acyl-CoA + oxidized [electron-transfer flavoprotein] + H(+) = a medium-chain (2E)-enoyl-CoA + reduced [electron-transfer flavoprotein]. It carries out the reaction pentanoyl-CoA + oxidized [electron-transfer flavoprotein] + H(+) = (2E)-pentenoyl-CoA + reduced [electron-transfer flavoprotein]. The enzyme catalyses hexanoyl-CoA + oxidized [electron-transfer flavoprotein] + H(+) = (2E)-hexenoyl-CoA + reduced [electron-transfer flavoprotein]. The catalysed reaction is octanoyl-CoA + oxidized [electron-transfer flavoprotein] + H(+) = (2E)-octenoyl-CoA + reduced [electron-transfer flavoprotein]. It catalyses the reaction decanoyl-CoA + oxidized [electron-transfer flavoprotein] + H(+) = (2E)-decenoyl-CoA + reduced [electron-transfer flavoprotein]. It carries out the reaction dodecanoyl-CoA + oxidized [electron-transfer flavoprotein] + H(+) = (2E)-dodecenoyl-CoA + reduced [electron-transfer flavoprotein]. The enzyme catalyses tetradecanoyl-CoA + oxidized [electron-transfer flavoprotein] + H(+) = (2E)-tetradecenoyl-CoA + reduced [electron-transfer flavoprotein]. The catalysed reaction is oxidized [electron-transfer flavoprotein] + hexadecanoyl-CoA + H(+) = (2E)-hexadecenoyl-CoA + reduced [electron-transfer flavoprotein]. The protein operates within lipid metabolism; mitochondrial fatty acid beta-oxidation. In terms of biological role, medium-chain specific acyl-CoA dehydrogenase is one of the acyl-CoA dehydrogenases that catalyze the first step of mitochondrial fatty acid beta-oxidation, an aerobic process breaking down fatty acids into acetyl-CoA and allowing the production of energy from fats. The first step of fatty acid beta-oxidation consists in the removal of one hydrogen from C-2 and C-3 of the straight-chain fatty acyl-CoA thioester, resulting in the formation of trans-2-enoyl-CoA. Electron transfer flavoprotein (ETF) is the electron acceptor that transfers electrons to the main mitochondrial respiratory chain via ETF-ubiquinone oxidoreductase (ETF dehydrogenase). Among the different mitochondrial acyl-CoA dehydrogenases, medium-chain specific acyl-CoA dehydrogenase acts specifically on acyl-CoAs with saturated 6 to 12 carbons long primary chains. This chain is Medium-chain specific acyl-CoA dehydrogenase, mitochondrial, found in Macaca fascicularis (Crab-eating macaque).